A 274-amino-acid chain; its full sequence is Oxidoreductase BOA17 (274 aa).

Positions 14, 32, 57, 84, and 117 each coordinate NADP(+). Active-site proton donor residues include S135 and Y149. The NADP(+) site is built by Y149, K153, I182, and T184. Catalysis depends on K153, which acts as the Lowers pKa of active site Tyr.

Belongs to the short-chain dehydrogenases/reductases (SDR) family.

It functions in the pathway polyketide biosynthesis. In terms of biological role, oxidoreductase; part of the gene cluster B that mediates the biosynthesis of botcinic acid and its botcinin derivatives, acetate-derived polyketides that contribute to virulence when combined with the sesquiterpene botrydial. Botcinic acid and its derivatives have been shown to induce chlorosis and necrosis during host plant infection, but also have antifungal activities. Two polyketide synthases, BOA6 and BOA9, are involved in the biosynthesis of botcinins. BOA6 mediates the formation of the per-methylated tetraketide core by condensation of four units of malonyl-CoA with one unit of acetyl-CoA, which would be methylated in activated methylene groups to yield a bicyclic acid intermediate that could then either be converted to botrylactone derivatives or lose the starter acetate unit through a retro-Claisen type C-C bond cleavage to yield botcinin derivatives. The second polyketide synthase, BOA9, is probably required for the biosynthesis of the tetraketide side chain of botcinins. The methyltransferase (MT) domain within BOA6 is probably responsible for the incorporation of four methyl groups. The trans-enoyl reductase BOA5 might take over the enoyl reductase function of BOA6 that misses an ER domain. The monooxygenases BOA2, BOA3 and BOA4 might be involved in further hydroxylations at C4, C5 and C8, whereas BOA7, close to BOA9, could potentially be involved in the hydroxylation at C4 in the side chain of botcinins. This is Oxidoreductase BOA17 from Botryotinia fuckeliana (strain B05.10) (Noble rot fungus).